A 235-amino-acid chain; its full sequence is tRNA (guanine-N(1)-)-methyltransferase (235 aa).

Residues glycine 114 and 134–139 (IGDYIL) contribute to the S-adenosyl-L-methionine site.

It belongs to the RNA methyltransferase TrmD family. Homodimer.

The protein localises to the cytoplasm. The catalysed reaction is guanosine(37) in tRNA + S-adenosyl-L-methionine = N(1)-methylguanosine(37) in tRNA + S-adenosyl-L-homocysteine + H(+). Functionally, specifically methylates guanosine-37 in various tRNAs. In Ehrlichia canis (strain Jake), this protein is tRNA (guanine-N(1)-)-methyltransferase.